The chain runs to 361 residues: uncharacterized protein (361 aa).

33 to 40 (GPINSGKT) contributes to the ATP binding site.

The protein belongs to the archaeal ATPase family.

This is an uncharacterized protein from Methanocaldococcus jannaschii (strain ATCC 43067 / DSM 2661 / JAL-1 / JCM 10045 / NBRC 100440) (Methanococcus jannaschii).